Here is a 205-residue protein sequence, read N- to C-terminus: Putative protein phosphatase inhibitor 2-like protein 1 (205 aa).

Disordered regions lie at residues Met1–Ser44, Gly64–Thr92, Ala107–Tyr148, and Val171–Ser205. Required for binding PPP1CC stretches follow at residues Lys12–Asp17 and Lys43–Thr55. Residues Asp17–Val26 show a composition bias toward polar residues. Residues Glu30–Ser44 are compositionally biased toward basic and acidic residues. Thr73 is modified (phosphothreonine; by GSK3). 2 stretches are compositionally biased toward acidic residues: residues Gly80–Thr91 and Ser121–Ser130. The residue at position 87 (Ser87) is a Phosphoserine; by CK2. The segment covering Pro131 to Arg144 has biased composition (basic and acidic residues). The interval His147–Glu150 is required for binding PPP1CC catalytic center, displacing metal ions and inhibition of PPP1CC catalytic activity. Residues Ser182–Ser205 show a composition bias toward polar residues.

This sequence belongs to the protein phosphatase inhibitor 2 family.

In terms of biological role, inhibitor of protein-phosphatase 1. This Homo sapiens (Human) protein is Putative protein phosphatase inhibitor 2-like protein 1 (PPP1R2P1).